A 587-amino-acid chain; its full sequence is Protein NDNF (587 aa).

An N-terminal signal peptide occupies residues M1 to A24. N-linked (GlcNAc...) asparagine glycosylation is found at N109, N129, N190, N321, N334, N459, N498, and N558.

As to quaternary structure, binds heparin. Interacts with dally; the interaction promotes dally degradation. Interacts with dpp and gbb.

It is found in the secreted. The protein localises to the extracellular space. Its subcellular location is the extracellular matrix. Secretory protein that acts as a feedback regulator of dpp/BMP, wg and hh signaling pathways. In the developing wing, is a dosage-dependent modulator of dpp/BMP signaling involved in wing growth and crossvein patterning; low levels promote and high levels inhibit dpp/BMP signaling. In the early pupal wing, inhibits dpp/BMP signaling activity to prevent the formation of ectopic crossveins in the posterior compartment. Binds to dpp and gbb to modulate their release and activity decreasing dpp/BMP signaling in the responding cells. During wing development regulates dpp/BMP coreceptor dally availability on the cell surface. Might have a role in testis development. The polypeptide is Protein NDNF (Drosophila melanogaster (Fruit fly)).